The following is a 266-amino-acid chain: Cyclin-C (266 aa).

In terms of domain architecture, Cyclin N-terminal spans 47 to 151 (IIQVLGEQLK…LLENLDCCLI (105 aa)).

The protein belongs to the cyclin family. Cyclin C subfamily. In terms of assembly, component of the Cdk8 module of the Mediator complex.

It is found in the nucleus. In terms of biological role, component of the Mediator complex, a coactivator involved in regulated gene transcription of nearly all RNA polymerase II-dependent genes. Mediator functions as a bridge to convey information from gene-specific regulatory proteins to the basal RNA polymerase II transcription machinery. Mediator is recruited to promoters by direct interactions with regulatory proteins and serves as a scaffold for the assembly of a functional preinitiation complex with RNA polymerase II and the general transcription factors. Binds to and activates cyclin-dependent kinase Cdk8 that phosphorylates the CTD (C-terminal domain) of the large subunit of RNA polymerase II (RNAp II), which may inhibit the formation of a transcription initiation complex. This Anopheles gambiae (African malaria mosquito) protein is Cyclin-C (CycC).